Here is a 364-residue protein sequence, read N- to C-terminus: MNRATATINVTALKHNLSQIKALAPKSLAWAMIKSNGYGHGLVRVAKALSDANAFGVACIDEALTLREVGIKSPIIVMKGFYNEAELSQFARHRLGAVIHCSDQVSLLKKTNLTSSLSVWLKIDTGMNRLGFSVEQSPAVYNQLKTSSSIQKPIGLMTHLADADNENKTFTELQIKRFFSVTEKMIGPKSIVNSAGFFAYPNALVDWIRPGIILYGISPFGINYNSFKEKIEKKFRPVMTLSAKIIAIKNRRKNDSVGYGCTWSCPEDMPIAIVSIGYGDGYPRHAPSGTPVLLNGKICPLIGRVSMDMIAIDLRSQPNAQVGDDVILWGEGLPVEIIAEKAGTIAYELLCKITQRVQFIEIEK.

K34 (proton acceptor; specific for D-alanine) is an active-site residue. K34 carries the post-translational modification N6-(pyridoxal phosphate)lysine. R129 provides a ligand contact to substrate. Residue Y259 is the Proton acceptor; specific for L-alanine of the active site. Residue M307 coordinates substrate.

Belongs to the alanine racemase family. Pyridoxal 5'-phosphate is required as a cofactor.

It carries out the reaction L-alanine = D-alanine. Its pathway is amino-acid biosynthesis; D-alanine biosynthesis; D-alanine from L-alanine: step 1/1. In terms of biological role, catalyzes the interconversion of L-alanine and D-alanine. May also act on other amino acids. This chain is Alanine racemase (alr), found in Coxiella burnetii (strain CbuG_Q212) (Coxiella burnetii (strain Q212)).